A 291-amino-acid polypeptide reads, in one-letter code: Protein/nucleic acid deglycase HchA (291 aa).

Residues 1 to 18 (MSNERDTSRTPTPDHAEH) are compositionally biased toward basic and acidic residues. The segment at 1–24 (MSNERDTSRTPTPDHAEHNAFFPS) is disordered. Cys-188 serves as the catalytic Nucleophile.

Belongs to the peptidase C56 family. HchA subfamily.

It localises to the cytoplasm. It catalyses the reaction N(omega)-(1-hydroxy-2-oxopropyl)-L-arginyl-[protein] + H2O = lactate + L-arginyl-[protein] + H(+). The catalysed reaction is N(6)-(1-hydroxy-2-oxopropyl)-L-lysyl-[protein] + H2O = lactate + L-lysyl-[protein] + H(+). It carries out the reaction S-(1-hydroxy-2-oxopropyl)-L-cysteinyl-[protein] + H2O = lactate + L-cysteinyl-[protein] + H(+). The enzyme catalyses N(omega)-(1-hydroxy-2-oxoethyl)-L-arginyl-[protein] + H2O = L-arginyl-[protein] + glycolate + H(+). It catalyses the reaction N(6)-(1-hydroxy-2-oxoethyl)-L-lysyl-[protein] + H2O = glycolate + L-lysyl-[protein] + H(+). The catalysed reaction is S-(1-hydroxy-2-oxoethyl)-L-cysteinyl-[protein] + H2O = glycolate + L-cysteinyl-[protein] + H(+). It carries out the reaction N(2)-(1-hydroxy-2-oxopropyl)-dGTP + H2O = lactate + dGTP + H(+). The enzyme catalyses N(2)-(1-hydroxy-2-oxopropyl)-GTP + H2O = lactate + GTP + H(+). It catalyses the reaction N(2)-(1-hydroxy-2-oxopropyl)-GDP + H2O = lactate + GDP + H(+). The catalysed reaction is N(2)-(1-hydroxy-2-oxopropyl)-GMP + H2O = lactate + GMP + H(+). It carries out the reaction N(2)-(1-hydroxy-2-oxoethyl)-dGTP + H2O = dGTP + glycolate + H(+). The enzyme catalyses N(2)-(1-hydroxy-2-oxoethyl)-GTP + H2O = glycolate + GTP + H(+). It catalyses the reaction N(2)-(1-hydroxy-2-oxoethyl)-GDP + H2O = glycolate + GDP + H(+). The catalysed reaction is N(2)-(1-hydroxy-2-oxoethyl)-GMP + H2O = glycolate + GMP + H(+). It carries out the reaction an N(2)-(1-hydroxy-2-oxopropyl)-guanosine in RNA + H2O = a guanosine in RNA + lactate + H(+). The enzyme catalyses an N(2)-(1-hydroxy-2-oxopropyl)-2'-deoxyguanosine in DNA + H2O = a 2'-deoxyguanosine in DNA + lactate + H(+). It catalyses the reaction an N(2)-(1-hydroxy-2-oxoethyl)-guanosine in RNA + H2O = a guanosine in RNA + glycolate + H(+). The catalysed reaction is an N(2)-(1-hydroxy-2-oxoethyl)-2'-deoxyguanosine in DNA + H2O = a 2'-deoxyguanosine in DNA + glycolate + H(+). Its function is as follows. Protein and nucleotide deglycase that catalyzes the deglycation of the Maillard adducts formed between amino groups of proteins or nucleotides and reactive carbonyl groups of glyoxals. Thus, functions as a protein deglycase that repairs methylglyoxal- and glyoxal-glycated proteins, and releases repaired proteins and lactate or glycolate, respectively. Deglycates cysteine, arginine and lysine residues in proteins, and thus reactivates these proteins by reversing glycation by glyoxals. Acts on early glycation intermediates (hemithioacetals and aminocarbinols), preventing the formation of Schiff bases and advanced glycation endproducts (AGE). Also functions as a nucleotide deglycase able to repair glycated guanine in the free nucleotide pool (GTP, GDP, GMP, dGTP) and in DNA and RNA. Is thus involved in a major nucleotide repair system named guanine glycation repair (GG repair), dedicated to reversing methylglyoxal and glyoxal damage via nucleotide sanitization and direct nucleic acid repair. Plays an important role in protecting cells from carbonyl stress. This chain is Protein/nucleic acid deglycase HchA, found in Pseudomonas aeruginosa (strain UCBPP-PA14).